Here is a 335-residue protein sequence, read N- to C-terminus: 2-acylglycerol O-acyltransferase 2-B (335 aa).

The next 2 membrane-spanning stretches (helical) occupy residues 24-44 and 104-124; these read WAVSFLAMAQCCIALYILLLF and YIMGFHPHGVLVVGAFGNFCT. Asn206 is a glycosylation site (N-linked (GlcNAc...) asparagine).

This sequence belongs to the diacylglycerol acyltransferase family.

It localises to the endoplasmic reticulum membrane. It is found in the cytoplasm. The protein localises to the perinuclear region. The catalysed reaction is a 2-acylglycerol + an acyl-CoA = a 1,2-diacylglycerol + CoA. It carries out the reaction a 2-acylglycerol + an acyl-CoA = a 1,2-diacyl-sn-glycerol + CoA. The enzyme catalyses a 2-acylglycerol + an acyl-CoA = a 2,3-diacyl-sn-glycerol + CoA. It catalyses the reaction a 1-acylglycerol + an acyl-CoA = a 1,2-diacylglycerol + CoA. The catalysed reaction is a 1-acylglycerol + an acyl-CoA = a 1,3-diacylglycerol + CoA. It carries out the reaction 1-O-alkylglycerol + an acyl-CoA = 1-O-alkyl-3-acylglycerol + CoA. The enzyme catalyses an acyl-CoA + a 1,2-diacyl-sn-glycerol = a triacyl-sn-glycerol + CoA. It functions in the pathway glycerolipid metabolism; triacylglycerol biosynthesis. In terms of biological role, catalyzes the formation of diacylglycerol from 2-monoacylglycerol and fatty acyl-CoA. Functionally, involved in glycerolipid synthesis and lipid metabolism. Catalyzes the formation of diacylglycerol, the precursor of triacylglycerol, by transferring the acyl chain of a fatty acyl-CoA to a monoacylglycerol. Plays a central role in absorption of dietary fat in the small intestine by catalyzing the resynthesis of triacylglycerol in enterocytes. Has a preference toward monoacylglycerols containing unsaturated fatty acids in an order of C18:3 &gt; C18:2 &gt; C18:1 &gt; C18:0 at sn-2. Able to use 1-monoalkylglycerol (1-MAkG, 1-O-alkylglycerol) as an acyl acceptor for the synthesis of monoalkyl-monoacylglycerol (MAMAG, 1-O-alkyl-3-acylglycerol or 1-O-alkyl-2-acylglycerol) and subsequently, with lower efficiency, may add another acyl chain producing monoalkyl-diacylglycerol (MADAG, 1-O-alkyl-2,3-diacylglycerol). Possesses weak but significant activity with diacylglycerol as substrate, producing triacylglycerol (triacyl-sn-glycerol). The polypeptide is 2-acylglycerol O-acyltransferase 2-B (mogat2-b) (Xenopus laevis (African clawed frog)).